Consider the following 71-residue polypeptide: Large ribosomal subunit protein uL29 (71 aa).

The interval 32-51 (GVNKSTGGAPSNPGKISETK) is disordered.

It belongs to the universal ribosomal protein uL29 family.

The protein is Large ribosomal subunit protein uL29 of Methanococcus maripaludis (strain DSM 14266 / JCM 13030 / NBRC 101832 / S2 / LL).